Here is a 198-residue protein sequence, read N- to C-terminus: V-type proton ATPase subunit E (198 aa).

This sequence belongs to the V-ATPase E subunit family.

Functionally, produces ATP from ADP in the presence of a proton gradient across the membrane. The protein is V-type proton ATPase subunit E of Borrelia turicatae (strain 91E135).